We begin with the raw amino-acid sequence, 320 residues long: HPr kinase/phosphorylase (320 aa).

Residues His-141 and Lys-162 contribute to the active site. Residue 156-163 (GHSGLGKS) coordinates ATP. Residue Ser-163 coordinates Mg(2+). Asp-180 acts as the Proton acceptor; for phosphorylation activity. Proton donor; for dephosphorylation activity in catalysis. The tract at residues 204-213 (LEVRGLGILN) is important for the catalytic mechanism of both phosphorylation and dephosphorylation. Residue Glu-205 coordinates Mg(2+). The active site involves Arg-248. Residues 269–274 (PVAVGR) are important for the catalytic mechanism of dephosphorylation.

This sequence belongs to the HPrK/P family. Homohexamer. It depends on Mg(2+) as a cofactor.

The enzyme catalyses [HPr protein]-L-serine + ATP = [HPr protein]-O-phospho-L-serine + ADP + H(+). It catalyses the reaction [HPr protein]-O-phospho-L-serine + phosphate + H(+) = [HPr protein]-L-serine + diphosphate. Catalyzes the ATP- as well as the pyrophosphate-dependent phosphorylation of a specific serine residue in HPr, a phosphocarrier protein of the phosphoenolpyruvate-dependent sugar phosphotransferase system (PTS). HprK/P also catalyzes the pyrophosphate-producing, inorganic phosphate-dependent dephosphorylation (phosphorolysis) of seryl-phosphorylated HPr (P-Ser-HPr). The sequence is that of HPr kinase/phosphorylase from Neisseria meningitidis serogroup A / serotype 4A (strain DSM 15465 / Z2491).